The sequence spans 1052 residues: Error-prone DNA polymerase (1052 aa).

The protein belongs to the DNA polymerase type-C family. DnaE2 subfamily.

It is found in the cytoplasm. The enzyme catalyses DNA(n) + a 2'-deoxyribonucleoside 5'-triphosphate = DNA(n+1) + diphosphate. DNA polymerase involved in damage-induced mutagenesis and translesion synthesis (TLS). It is not the major replicative DNA polymerase. In Bordetella parapertussis (strain 12822 / ATCC BAA-587 / NCTC 13253), this protein is Error-prone DNA polymerase.